Here is a 611-residue protein sequence, read N- to C-terminus: Muscarinic acetylcholine receptor gar-3 (611 aa).

Topologically, residues 1–67 (MQSSSLGNAD…LLGEEGRMVM (67 aa)) are extracellular. N-linked (GlcNAc...) asparagine glycosylation is found at asparagine 28 and asparagine 33. The chain crosses the membrane as a helical span at residues 68-88 (IVVIGAMFALVTSLGNLMVMV). The Cytoplasmic segment spans residues 89 to 101 (SFKIDKQLQTISN). Residues 102–122 (YFLFSLAVADIAIGVISIPMF) traverse the membrane as a helical segment. The Extracellular portion of the chain corresponds to 123 to 140 (TYYTAIQKWDLGYTMCQF). A disulfide bridge links cysteine 138 with cysteine 218. The helical transmembrane segment at 141–161 (WLCIDYLMSNASVLNLLLISF) threads the bilayer. Over 162–181 (DRYFSVTRPLSYRPRRTTKK) the chain is Cytoplasmic. The chain crosses the membrane as a helical span at residues 182–202 (ALTMIACTYIISLILWPPWII). Over 203–227 (SWPYIEGKFTAEPGTCVVQFLQTNP) the chain is Extracellular. A helical transmembrane segment spans residues 228–248 (YVTVGTAVAAFYLPVTIMCIL). The Cytoplasmic portion of the chain corresponds to 249–525 (YTRVYWETQK…RKQESKAAKT (277 aa)). 4 disordered regions span residues 299–364 (RRSM…SSEA), 377–432 (SHFA…NNNS), 446–477 (SRPS…NSEI), and 500–519 (FSSQ…RKQE). The span at 307–317 (SSTSIIKSSGS) shows a compositional bias: low complexity. A compositionally biased stretch (basic and acidic residues) spans 503-519 (QERKSEKEQRKNERKQE). A helical membrane pass occupies residues 526-546 (LSAILCAFIATWTPYNLIVCW). At 547-557 (EAFFPNTVPNV) the chain is on the extracellular side. Residues 558 to 578 (LWTFSYFLCYINSTINPLCYA) traverse the membrane as a helical segment. Over 579 to 611 (LCNARFRHTYMRILRCKFKAERPTMNQGYVRRN) the chain is Cytoplasmic.

Belongs to the G-protein coupled receptor 1 family. Muscarinic acetylcholine receptor subfamily.

The protein localises to the cell membrane. Functionally, the muscarinic acetylcholine receptor mediates various cellular responses, including inhibition of adenylate cyclase, breakdown of phosphoinositides and modulation of potassium channels through the action of G proteins. Primary transducing effect is Pi turnover. Enhances the release of the neurotransmitter acetlycholine in cholinergic motor neurons, which in turn positively feeds back to depolarize body wall muscles and allows for the maintenance of normal body posture and locomotion. In Caenorhabditis elegans, this protein is Muscarinic acetylcholine receptor gar-3 (gar-3).